The following is a 385-amino-acid chain: MVFDLKRIVRPKIYNLEPYRCARDDFTEGILLDANENAHGPTPVELSKTNLHRYPDPHQLEFKTAMTKYRNKTSSYANDPEVKPLTADNLCLGVGSDESIDAIIRACCVPGKEKILVLPPTYSMYSVCANINDIEVVQCPLTVSDGSFQMDTEAVLTILKNDSLIKLMFVTSPGNPTGAKIKTSLIEKVLQNWDNGLVVVDEAYVDFCGGSTAPLVTKYPNLVTLQTLSKSFGLAGIRLGMTYATAELARILNAMKAPYNISSLASEYALKAVQDSNLKKMEATSKIINEEKMRLLKELTALDYVDDQYVGGLDANFLLIRINGGDNVLAKKLYYQLATQSGVVVRFRGNELGCSGCLRITVGTHEENTHLIKYFKETLYKLANE.

An N6-(pyridoxal phosphate)lysine modification is found at K230.

This sequence belongs to the class-II pyridoxal-phosphate-dependent aminotransferase family. Pyridoxal 5'-phosphate serves as cofactor.

It carries out the reaction L-histidinol phosphate + 2-oxoglutarate = 3-(imidazol-4-yl)-2-oxopropyl phosphate + L-glutamate. Its pathway is amino-acid biosynthesis; L-histidine biosynthesis; L-histidine from 5-phospho-alpha-D-ribose 1-diphosphate: step 7/9. The sequence is that of Histidinol-phosphate aminotransferase from Saccharomyces cerevisiae (strain ATCC 204508 / S288c) (Baker's yeast).